A 488-amino-acid polypeptide reads, in one-letter code: MDHSIGGRNCQSGGTTASAPRSTGSDEFPSKLRETCHACSLSKVRCSKEKPSCSRCAKRGVPCEYIVTKRPGRKRDPTKSAGLTSSHCKSFDAATAAPNNTNANCAWLEDVLLTDMGGSGGGSTGHAYLDSTQTDTGSPMLWPLMANDGADIAGDMSDFLMPLITPLSCTFTARTPDFLSAAAEFSAPISPPNNHDDKNNNQSMQDGSNVMQLLLPDDVHGGHAAENAAQEAPSVDFHSSCSSRSLSSVPESFLSSKIASNSDFGSASSSCECLIKALDIMAKVSSTDLAVTPDTPSTRRNSVQDEAVVAGHDQTSPLLHATFMANKQTIEALSNMLHGSCQENVYLLTCMSMIVFKVLRRYEMAAGQSISAGVLDMHEAARPRHGDLDRDSLRRAAAQLVLGELHLVQQLVSRLSRRLQLSMDKTPNDGADSELSDSTLATRVFTLDEDDKADTSAFSAATLSQMDHDLRKGLARLSSNIINMLRRL.

The segment at 1-29 (MDHSIGGRNCQSGGTTASAPRSTGSDEFP) is disordered. Over residues 9–25 (NCQSGGTTASAPRSTGS) the composition is skewed to polar residues. Residues 36-63 (CHACSLSKVRCSKEKPSCSRCAKRGVPC) constitute a DNA-binding region (zn(2)-C6 fungal-type).

The protein localises to the nucleus. In terms of biological role, transcription factor; part of the gene cluster responsible for the typical purple-black color of the ergot sclerotia. The ergochrome gene cluster produces several ergot pigments including the yellow ergochrome secalonic acid and its derivatives, as well as the red anthraquinones endocrocin and clavorubin. The chain is Ergochrome gene cluster transcriptional regulator CPUR_05433 from Claviceps purpurea (strain 20.1) (Ergot fungus).